We begin with the raw amino-acid sequence, 432 residues long: Adenylosuccinate synthetase (432 aa).

Residues G12–K18 and G40–T42 each bind GTP. Residue D13 is the Proton acceptor of the active site. Mg(2+) is bound by residues D13 and G40. IMP contacts are provided by residues D13–K16, N38–H41, T128, R142, Q223, T238, and R302. The active-site Proton donor is H41. T298–R304 is a binding site for substrate. GTP contacts are provided by residues R304, L330 to D332, and S412 to G414.

Belongs to the adenylosuccinate synthetase family. Homodimer. It depends on Mg(2+) as a cofactor.

Its subcellular location is the cytoplasm. The enzyme catalyses IMP + L-aspartate + GTP = N(6)-(1,2-dicarboxyethyl)-AMP + GDP + phosphate + 2 H(+). Its pathway is purine metabolism; AMP biosynthesis via de novo pathway; AMP from IMP: step 1/2. Its function is as follows. Plays an important role in the de novo pathway of purine nucleotide biosynthesis. Catalyzes the first committed step in the biosynthesis of AMP from IMP. The polypeptide is Adenylosuccinate synthetase (Limosilactobacillus reuteri (strain DSM 20016) (Lactobacillus reuteri)).